We begin with the raw amino-acid sequence, 418 residues long: D-amino acid dehydrogenase (418 aa).

3 to 17 (VLILGSGVVGVATAY) contacts FAD.

The protein belongs to the DadA oxidoreductase family. FAD is required as a cofactor.

It catalyses the reaction a D-alpha-amino acid + A + H2O = a 2-oxocarboxylate + AH2 + NH4(+). The protein operates within amino-acid degradation; D-alanine degradation; NH(3) and pyruvate from D-alanine: step 1/1. Oxidative deamination of D-amino acids. In Granulibacter bethesdensis (strain ATCC BAA-1260 / CGDNIH1), this protein is D-amino acid dehydrogenase.